Reading from the N-terminus, the 296-residue chain is Probable 2-(5''-triphosphoribosyl)-3'-dephosphocoenzyme-A synthase (296 aa).

It belongs to the CitG/MdcB family.

It catalyses the reaction 3'-dephospho-CoA + ATP = 2'-(5''-triphospho-alpha-D-ribosyl)-3'-dephospho-CoA + adenine. The protein is Probable 2-(5''-triphosphoribosyl)-3'-dephosphocoenzyme-A synthase of Streptococcus mutans serotype c (strain ATCC 700610 / UA159).